The following is a 350-amino-acid chain: Serpentine receptor class beta-12 (350 aa).

The Extracellular segment spans residues 1-21 (MSEANLTECELAYQLTYHPFY). The N-linked (GlcNAc...) asparagine glycan is linked to asparagine 5. Residues 22-42 (MIAQFWSFFVSLLAMPSLIFF) form a helical membrane-spanning segment. Topologically, residues 43-57 (MVEKVFKLPFHGNLK) are cytoplasmic. The chain crosses the membrane as a helical span at residues 58–78 (FLLVSYFIGTFLFASIICFTF). Over 79 to 103 (GYHFFVPFFVTSNCDLIINATLFKY) the chain is Extracellular. A glycan (N-linked (GlcNAc...) asparagine) is linked at asparagine 97. The helical transmembrane segment at 104–124 (GHMIALIFMTIPMILPTAFTV) threads the bilayer. Topologically, residues 125–141 (ERFVALKMAHSYEHVRT) are cytoplasmic. Residues 142–162 (LLGPVLVLVVIAIDSMFLYDI) form a helical membrane-spanning segment. The Extracellular portion of the chain corresponds to 163–189 (YGQEKFDKPFINFILVPATSALQFNSF). Residues 190-210 (LWYMLYLKITNFICNLILLFI) form a helical membrane-spanning segment. Topologically, residues 211–243 (HKILHQSSRYRRKNVSLSVKYEMQEISQSSRFT) are cytoplasmic. The helical transmembrane segment at 244–264 (LIVTFTHLLFFGWYVSTILLI) threads the bilayer. Residues 265–282 (RTVGPDFFRGFINYTVMR) are Extracellular-facing. Asparagine 277 is a glycosylation site (N-linked (GlcNAc...) asparagine). Residues 283 to 303 (GVYCATPTYNLVIVFIGFKAL) traverse the membrane as a helical segment. Residues 304-350 (NHLNFKRNNKVQSTIQIKSTGQEGAENYDNAISNYWDSVYTMNKSKL) lie on the Cytoplasmic side of the membrane.

Belongs to the nematode receptor-like protein srb family. As to expression, expressed throughout the head.

Its subcellular location is the cell membrane. It is found in the perikaryon. The protein resides in the cell projection. It localises to the dendrite. In terms of biological role, G-protein coupled receptor. Plays a role in the navigational capacity of sperm and promotes the targeting of sperm derived from males to the fertilization site in the uterus of hermaphrodites. This chain is Serpentine receptor class beta-12, found in Caenorhabditis elegans.